Here is a 192-residue protein sequence, read N- to C-terminus: Crossover junction endodeoxyribonuclease RuvC (192 aa).

Residues aspartate 20, glutamate 80, and aspartate 153 contribute to the active site. Mg(2+) contacts are provided by aspartate 20, glutamate 80, and aspartate 153.

This sequence belongs to the RuvC family. In terms of assembly, homodimer which binds Holliday junction (HJ) DNA. The HJ becomes 2-fold symmetrical on binding to RuvC with unstacked arms; it has a different conformation from HJ DNA in complex with RuvA. In the full resolvosome a probable DNA-RuvA(4)-RuvB(12)-RuvC(2) complex forms which resolves the HJ. Mg(2+) is required as a cofactor.

Its subcellular location is the cytoplasm. It carries out the reaction Endonucleolytic cleavage at a junction such as a reciprocal single-stranded crossover between two homologous DNA duplexes (Holliday junction).. Functionally, the RuvA-RuvB-RuvC complex processes Holliday junction (HJ) DNA during genetic recombination and DNA repair. Endonuclease that resolves HJ intermediates. Cleaves cruciform DNA by making single-stranded nicks across the HJ at symmetrical positions within the homologous arms, yielding a 5'-phosphate and a 3'-hydroxyl group; requires a central core of homology in the junction. The consensus cleavage sequence is 5'-(A/T)TT(C/G)-3'. Cleavage occurs on the 3'-side of the TT dinucleotide at the point of strand exchange. HJ branch migration catalyzed by RuvA-RuvB allows RuvC to scan DNA until it finds its consensus sequence, where it cleaves and resolves the cruciform DNA. In Christiangramia forsetii (strain DSM 17595 / CGMCC 1.15422 / KT0803) (Gramella forsetii), this protein is Crossover junction endodeoxyribonuclease RuvC.